We begin with the raw amino-acid sequence, 402 residues long: Flavohemoprotein (402 aa).

The region spanning 1 to 136 (MLSEKTIEIV…IADAFISIEA (136 aa)) is the Globin domain. Position 85 (H85) interacts with heme b. Residues Y95 and E135 each act as charge relay system in the active site. The interval 147–402 (GGWKDFRNFV…EFFGPAASLQ (256 aa)) is reductase. In terms of domain architecture, FAD-binding FR-type spans 150–260 (KDFRNFVVVK…SAPAGDFVLN (111 aa)). FAD is bound by residues Y188 and 204-207 (RQYS). Residue 273 to 278 (GVGITP) coordinates NADP(+). 394-397 (FFGP) serves as a coordination point for FAD.

This sequence belongs to the globin family. Two-domain flavohemoproteins subfamily. It in the C-terminal section; belongs to the flavoprotein pyridine nucleotide cytochrome reductase family. It depends on heme b as a cofactor. The cofactor is FAD.

It carries out the reaction 2 nitric oxide + NADPH + 2 O2 = 2 nitrate + NADP(+) + H(+). The enzyme catalyses 2 nitric oxide + NADH + 2 O2 = 2 nitrate + NAD(+) + H(+). Its function is as follows. Is involved in NO detoxification in an aerobic process, termed nitric oxide dioxygenase (NOD) reaction that utilizes O(2) and NAD(P)H to convert NO to nitrate, which protects the bacterium from various noxious nitrogen compounds. Therefore, plays a central role in the inducible response to nitrosative stress. The protein is Flavohemoprotein of Bacillus thuringiensis subsp. konkukian (strain 97-27).